We begin with the raw amino-acid sequence, 449 residues long: Tubulin beta-2 chain (449 aa).

GTP-binding residues include glutamine 11 and glutamate 69. Glutamate 69 is a binding site for Mg(2+). Methylhistidine is present on histidine 137. 6 residues coordinate GTP: serine 138, glycine 142, threonine 143, glycine 144, asparagine 204, and asparagine 226.

The protein belongs to the tubulin family. As to quaternary structure, dimer of alpha and beta chains. A typical microtubule is a hollow water-filled tube with an outer diameter of 25 nm and an inner diameter of 15 nM. Alpha-beta heterodimers associate head-to-tail to form protofilaments running lengthwise along the microtubule wall with the beta-tubulin subunit facing the microtubule plus end conferring a structural polarity. Microtubules usually have 13 protofilaments but different protofilament numbers can be found in some organisms and specialized cells. It depends on Mg(2+) as a cofactor.

It localises to the cytoplasm. It is found in the cytoskeleton. In terms of biological role, tubulin is the major constituent of microtubules, a cylinder consisting of laterally associated linear protofilaments composed of alpha- and beta-tubulin heterodimers. Microtubules grow by the addition of GTP-tubulin dimers to the microtubule end, where a stabilizing cap forms. Below the cap, tubulin dimers are in GDP-bound state, owing to GTPase activity of alpha-tubulin. The chain is Tubulin beta-2 chain (tubC) from Emericella nidulans (strain FGSC A4 / ATCC 38163 / CBS 112.46 / NRRL 194 / M139) (Aspergillus nidulans).